The following is a 218-amino-acid chain: Alkylmercury lyase (218 aa).

The protein belongs to the MerB family.

It carries out the reaction an alkylmercury + H(+) = an alkane + Hg(2+). Cleaves the carbon-mercury bond of organomercurials such as phenylmercuric acetate. One product is Hg(2+), which is subsequently detoxified by the mercuric reductase. The protein is Alkylmercury lyase (merB1) of Bacillus cereus.